A 92-amino-acid chain; its full sequence is DNA-directed RNA polymerase subunit omega (92 aa).

The protein belongs to the RNA polymerase subunit omega family. In terms of assembly, the RNAP catalytic core consists of 2 alpha, 1 beta, 1 beta' and 1 omega subunit. When a sigma factor is associated with the core the holoenzyme is formed, which can initiate transcription.

The enzyme catalyses RNA(n) + a ribonucleoside 5'-triphosphate = RNA(n+1) + diphosphate. Its function is as follows. Promotes RNA polymerase assembly. Latches the N- and C-terminal regions of the beta' subunit thereby facilitating its interaction with the beta and alpha subunits. This is DNA-directed RNA polymerase subunit omega from Shewanella frigidimarina (strain NCIMB 400).